The sequence spans 255 residues: tRNA (guanine-N(1)-)-methyltransferase (255 aa).

Residues G113 and 133–138 (IGDYVL) contribute to the S-adenosyl-L-methionine site.

This sequence belongs to the RNA methyltransferase TrmD family. Homodimer.

It is found in the cytoplasm. It catalyses the reaction guanosine(37) in tRNA + S-adenosyl-L-methionine = N(1)-methylguanosine(37) in tRNA + S-adenosyl-L-homocysteine + H(+). Specifically methylates guanosine-37 in various tRNAs. This is tRNA (guanine-N(1)-)-methyltransferase from Salmonella schwarzengrund (strain CVM19633).